The primary structure comprises 706 residues: DNA helicase/primase complex-associated protein (706 aa).

The disordered stretch occupies residues 203–249 (CPGGDGGEEGDGAEGGDGGVGGAGDGAGAGGGSSGKPPAGKRGRPTR). Residues 217-236 (GGDGGVGGAGDGAGAGGGSS) are compositionally biased toward gly residues.

The protein belongs to the herpesviridae HEPA family. As to quaternary structure, associates with the primase and the helicase to form the helicase-primase complex. Interacts with the origin-binding protein. Interacts with the polymerase catalytic subunit.

It localises to the host nucleus. Its function is as follows. Component of the helicase/primase complex. Unwinds the DNA at the replication forks and generates single-stranded DNA for both leading and lagging strand synthesis. The primase synthesizes short RNA primers on the lagging strand that the polymerase presumably elongates using dNTPs. The primase-associated factor has no known catalytic activity in the complex and may serve to facilitate the formation of the replisome by directly interacting with the origin-binding protein and the polymerase. The chain is DNA helicase/primase complex-associated protein (40) from Equus caballus (Horse).